Consider the following 61-residue polypeptide: Metallothionein-1B (61 aa).

The beta stretch occupies residues 1–29 (MDPNCSCVAGESCTCAGSCKCKQCRCASC). Cysteine 5, cysteine 7, cysteine 13, cysteine 15, cysteine 19, cysteine 21, cysteine 24, cysteine 26, cysteine 29, cysteine 33, cysteine 34, cysteine 36, cysteine 37, cysteine 41, cysteine 44, cysteine 48, cysteine 50, cysteine 57, cysteine 59, and cysteine 60 together coordinate a divalent metal cation. The alpha stretch occupies residues 30–61 (KKSCCSCCPVGCAKCAQGCVCKGASDKCSCCA).

The protein belongs to the metallothionein superfamily. Type 1 family.

Metallothioneins have a high content of cysteine residues that bind various heavy metals; these proteins are transcriptionally regulated by both heavy metals and glucocorticoids. The polypeptide is Metallothionein-1B (Equus caballus (Horse)).